A 320-amino-acid polypeptide reads, in one-letter code: Mitochondrial thiamine pyrophosphate carrier (320 aa).

3 Solcar repeats span residues 13–106 (NTKL…LTEL), 116–202 (REFS…LKHL), and 214–309 (NENL…FCNV). Residues 19–39 (AVAGSVSGLVTRALISPFDVI) traverse the membrane as a helical segment. Phosphoserine is present on S51. The next 4 membrane-spanning stretches (helical) occupy residues 87–107 (ILSI…TELV), 122–142 (FVCG…VDVL), 173–193 (VFYK…GLQF), and 220–240 (LLCG…LDLF). A Substrate recognition motif is present at residues 241–246 (KKRLQV). Residues 293 to 313 (ALSTGFMFFWYEFFCNVFHCM) form a helical membrane-spanning segment.

Belongs to the mitochondrial carrier (TC 2.A.29) family.

The protein resides in the mitochondrion membrane. The enzyme catalyses thiamine phosphate(out) + thiamine diphosphate(in) = thiamine phosphate(in) + thiamine diphosphate(out). In terms of biological role, mitochondrial transporter mediating uptake of thiamine diphosphate into mitochondria. It is not clear if the antiporter activity is affected by the membrane potential or by the proton electrochemical gradient. In Macaca fascicularis (Crab-eating macaque), this protein is Mitochondrial thiamine pyrophosphate carrier (SLC25A19).